A 484-amino-acid chain; its full sequence is D-aminoacylase (484 aa).

This sequence belongs to the metallo-dependent hydrolases superfamily. N-acyl-D-amino-acid deacylase family. Requires Zn(2+) as cofactor.

It is found in the cytoplasm. The enzyme catalyses an N-acyl-D-amino acid + H2O = a D-alpha-amino acid + a carboxylate. Functionally, has a wide specificity; hydrolyzes N-acyl derivative of neutral D-amino acids. This Alcaligenes xylosoxydans xylosoxydans (Achromobacter xylosoxidans) protein is D-aminoacylase (dan).